The chain runs to 94 residues: Putative RNA-binding protein RbpD (94 aa).

One can recognise an RRM domain in the interval 2–79; sequence TIYVGNLSYR…RQLRVNKAKP (78 aa). Residues 73–94 are disordered; it reads RVNKAKPREDDRRGSWGKKQDY. Residues 78-94 are compositionally biased toward basic and acidic residues; the sequence is KPREDDRRGSWGKKQDY.

The sequence is that of Putative RNA-binding protein RbpD (rbpD) from Nostoc sp. (strain PCC 7120 / SAG 25.82 / UTEX 2576).